We begin with the raw amino-acid sequence, 29 residues long: Kappa-theraphotoxin-Ps1a (29 aa).

3 cysteine pairs are disulfide-bonded: Cys-2/Cys-16, Cys-9/Cys-21, and Cys-15/Cys-25. Ile-29 is subject to Isoleucine amide.

This sequence belongs to the neurotoxin 30 (phrixotoxin) family. As to expression, expressed by the venom gland.

The protein localises to the secreted. Potent and specific blocker of Kv4.2/KCND2 (IC(50)=5 nM) and Kv4.3/KCND3 (IC(50)=28 nM) potassium channels. Acts by altering the gating properties of these channels. Also shows moderate inhibition on human voltage-gated sodium channel Nav1.7/SCN9A activation (IC(50)=423 nM). The sequence is that of Kappa-theraphotoxin-Ps1a from Paraphysa scrofa (Chilean copper tarantula).